The chain runs to 436 residues: Na(+)/H(+) antiporter NhaA 1 (436 aa).

A run of 11 helical transmembrane segments spans residues 35–55 (FGGG…NSPW), 80–100 (LATW…GLEL), 116–136 (ALPV…YVGV), 147–167 (GWAI…AVIG), 176–196 (AFLL…IAIF), 201–221 (FKLT…LLVQ), 226–246 (WWWA…ESGV), 283–303 (VSAG…SLRG), 313–333 (PIVV…IFGS), 354–374 (LLGV…IGEL), and 385–405 (VKAA…IVLI).

This sequence belongs to the NhaA Na(+)/H(+) (TC 2.A.33) antiporter family.

It is found in the cell membrane. It carries out the reaction Na(+)(in) + 2 H(+)(out) = Na(+)(out) + 2 H(+)(in). In terms of biological role, na(+)/H(+) antiporter that extrudes sodium in exchange for external protons. This Salinispora tropica (strain ATCC BAA-916 / DSM 44818 / JCM 13857 / NBRC 105044 / CNB-440) protein is Na(+)/H(+) antiporter NhaA 1.